The chain runs to 199 residues: Protein GrpE (199 aa).

The tract at residues 1–27 (MSEQNTNHESPEQNVAHDNIEHSDSIL) is disordered. The span at 18–27 (DNIEHSDSIL) shows a compositional bias: basic and acidic residues.

This sequence belongs to the GrpE family. In terms of assembly, homodimer.

It is found in the cytoplasm. In terms of biological role, participates actively in the response to hyperosmotic and heat shock by preventing the aggregation of stress-denatured proteins, in association with DnaK and GrpE. It is the nucleotide exchange factor for DnaK and may function as a thermosensor. Unfolded proteins bind initially to DnaJ; upon interaction with the DnaJ-bound protein, DnaK hydrolyzes its bound ATP, resulting in the formation of a stable complex. GrpE releases ADP from DnaK; ATP binding to DnaK triggers the release of the substrate protein, thus completing the reaction cycle. Several rounds of ATP-dependent interactions between DnaJ, DnaK and GrpE are required for fully efficient folding. The sequence is that of Protein GrpE from Psychrobacter sp. (strain St1).